Reading from the N-terminus, the 793-residue chain is Ent-copalyl diphosphate synthase, chloroplastic (793 aa).

The transit peptide at 1-47 directs the protein to the chloroplast; it reads MPLASNPVAFLPSSTAHGDLPAAAFSRSSAGCLQLCRPLTPTSSLQC. Mg(2+) contacts are provided by Asp372 and Asp374. The DXDD motif motif lies at 372–375; sequence DIDD.

It belongs to the terpene synthase family. The cofactor is Mg(2+).

The protein resides in the plastid. It is found in the chloroplast. It catalyses the reaction (2E,6E,10E)-geranylgeranyl diphosphate = ent-copalyl diphosphate. It functions in the pathway plant hormone biosynthesis; gibberellin biosynthesis. Catalyzes the conversion of geranylgeranyl diphosphate (GGPP) to the gibberellin precursor ent-copalyl diphosphate (CPP). The polypeptide is Ent-copalyl diphosphate synthase, chloroplastic (Salvia miltiorrhiza (Chinese sage)).